A 473-amino-acid chain; its full sequence is NADH-quinone oxidoreductase subunit N (473 aa).

14 helical membrane passes run 3-23 (LHYL…LVIA), 30-50 (LAFY…CSLL), 62-82 (FSSM…FLWL), 99-119 (FYLL…SEHF), 120-140 (ASFF…IAYS), 153-173 (YLIL…IVYL), 195-215 (MLFT…LSLV), 230-252 (LPTT…WKLF), 262-282 (IVLT…NLLA), 291-311 (ILAF…FLFN), 326-346 (ALLF…SILM), 368-388 (AASL…LGFM), 408-428 (FLVI…MVML), and 444-464 (VASL…PALF).

This sequence belongs to the complex I subunit 2 family. In terms of assembly, NDH-1 is composed of 13 different subunits. Subunits NuoA, H, J, K, L, M, N constitute the membrane sector of the complex.

It is found in the cell inner membrane. It carries out the reaction a quinone + NADH + 5 H(+)(in) = a quinol + NAD(+) + 4 H(+)(out). In terms of biological role, NDH-1 shuttles electrons from NADH, via FMN and iron-sulfur (Fe-S) centers, to quinones in the respiratory chain. The immediate electron acceptor for the enzyme in this species is believed to be ubiquinone. Couples the redox reaction to proton translocation (for every two electrons transferred, four hydrogen ions are translocated across the cytoplasmic membrane), and thus conserves the redox energy in a proton gradient. This Shewanella woodyi (strain ATCC 51908 / MS32) protein is NADH-quinone oxidoreductase subunit N.